Consider the following 490-residue polypeptide: JNK-interacting protein 1 (490 aa).

Disordered stretches follow at residues 1–71 and 213–254; these read MADS…DHEP and EDSS…PVSQ. The segment covering 231-249 has biased composition (polar residues); that stretch reads GHSTAHSPNDFKSMSPQIT. The SH3 domain maps to 271-332; sequence MLEATHRGLH…PSAYAVDLDY (62 aa). One can recognise a PID domain in the interval 344 to 479; sequence KERYLLGYLG…FQRFYQKFIE (136 aa).

The protein belongs to the JIP scaffold family. As to quaternary structure, forms homo- and heterooligomeric complexes. Binds Hep, a dual specificity protein kinase in the JNK pathway, but not its downstream target bsk. The C-terminal region interacts with the kinesin light chain protein, Klc, and the C-terminal PTY motif of amyloid-beta protein precursor-like protein, Appl. Expressed in the brain, CNS, PNS and cells posterior to the morphogenetic furrow in the eye imaginal disk of late embryos.

Its subcellular location is the cytoplasm. Functionally, the JNK-interacting protein (JIP) group of scaffold proteins selectively mediates JNK signaling by aggregating specific components of the MAPK cascade to form a functional JNK signaling module. May function as a regulator of vesicle transport, through interactions with the JNK-signaling components and motor proteins. The chain is JNK-interacting protein 1 (Aplip1) from Drosophila melanogaster (Fruit fly).